Reading from the N-terminus, the 425-residue chain is Serine--tRNA ligase (425 aa).

228–230 contributes to the L-serine binding site; sequence TAE. Residue 259 to 261 participates in ATP binding; it reads RSE. Residue E282 participates in L-serine binding. 346-349 serves as a coordination point for ATP; it reads EIAS. Residue S382 coordinates L-serine.

Belongs to the class-II aminoacyl-tRNA synthetase family. Type-1 seryl-tRNA synthetase subfamily. In terms of assembly, homodimer. The tRNA molecule binds across the dimer.

It is found in the cytoplasm. It carries out the reaction tRNA(Ser) + L-serine + ATP = L-seryl-tRNA(Ser) + AMP + diphosphate + H(+). The catalysed reaction is tRNA(Sec) + L-serine + ATP = L-seryl-tRNA(Sec) + AMP + diphosphate + H(+). Its pathway is aminoacyl-tRNA biosynthesis; selenocysteinyl-tRNA(Sec) biosynthesis; L-seryl-tRNA(Sec) from L-serine and tRNA(Sec): step 1/1. In terms of biological role, catalyzes the attachment of serine to tRNA(Ser). Is also able to aminoacylate tRNA(Sec) with serine, to form the misacylated tRNA L-seryl-tRNA(Sec), which will be further converted into selenocysteinyl-tRNA(Sec). This Rickettsia africae (strain ESF-5) protein is Serine--tRNA ligase.